The following is a 96-amino-acid chain: Small ribosomal subunit protein bS6 (96 aa).

The protein belongs to the bacterial ribosomal protein bS6 family.

Binds together with bS18 to 16S ribosomal RNA. The polypeptide is Small ribosomal subunit protein bS6 (Bacillus cereus (strain G9842)).